The chain runs to 282 residues: TPR repeat protein oca3 (282 aa).

TPR repeat units lie at residues Ile-16–Thr-50, Pro-71–His-104, Leu-139–Glu-172, and Arg-174–Tyr-211.

Its subcellular location is the cytoplasm. The protein localises to the nucleus. In terms of biological role, may be involved in cell cycle regulation. The chain is TPR repeat protein oca3 (oca3) from Schizosaccharomyces pombe (strain 972 / ATCC 24843) (Fission yeast).